A 116-amino-acid polypeptide reads, in one-letter code: MSVKKETRLRRARKTRLKMRELEVVRLCVHRSSQHIYAQVITADGGKVLASASTLDKELRGAATGNVEAAKKVGLLVAERAKAAGVTQVAFDRSGFKYHGRVKALADAAREGGLEF.

This sequence belongs to the universal ribosomal protein uL18 family. As to quaternary structure, part of the 50S ribosomal subunit; part of the 5S rRNA/L5/L18/L25 subcomplex. Contacts the 5S and 23S rRNAs.

Functionally, this is one of the proteins that bind and probably mediate the attachment of the 5S RNA into the large ribosomal subunit, where it forms part of the central protuberance. This Azotobacter vinelandii (strain DJ / ATCC BAA-1303) protein is Large ribosomal subunit protein uL18.